A 102-amino-acid chain; its full sequence is Protein translation factor SUI1 homolog (102 aa).

Belongs to the SUI1 family.

The sequence is that of Protein translation factor SUI1 homolog from Methanococcus vannielii.